A 479-amino-acid polypeptide reads, in one-letter code: Beta-amyrin 28-monooxygenase (479 aa).

The helical transmembrane segment at 5-25 threads the bilayer; the sequence is FYLSLLLLFVTFISLSLFFIF. Residue Cys426 coordinates heme.

It belongs to the cytochrome P450 family. It depends on heme as a cofactor. In terms of tissue distribution, expressed in roots, nodules and flowers.

It localises to the membrane. The catalysed reaction is beta-amyrin + 3 reduced [NADPH--hemoprotein reductase] + 3 O2 = oleanolate + 3 oxidized [NADPH--hemoprotein reductase] + 4 H2O + 4 H(+). Its function is as follows. Catalyzes the carboxylation of beta-amyrin at the C-28 position to form oleanolic acid. Involved in an early step in the hemolytic saponin biosynthetic pathway. Catalyzes the carboxylation of alpha-amyrin and lupeol at the C-28 position to form ursolic acid and betulinic acid respectively. In Medicago truncatula (Barrel medic), this protein is Beta-amyrin 28-monooxygenase.